The chain runs to 444 residues: N-succinylarginine dihydrolase (444 aa).

Residues 19-28, Asn110, and 137-138 contribute to the substrate site; these read AGLSFGNVAS and HR. Residue Glu174 is part of the active site. Arg214 provides a ligand contact to substrate. Residue His250 is part of the active site. Substrate-binding residues include Asp252 and Asn362. Cys368 functions as the Nucleophile in the catalytic mechanism.

Belongs to the succinylarginine dihydrolase family. As to quaternary structure, homodimer.

The enzyme catalyses N(2)-succinyl-L-arginine + 2 H2O + 2 H(+) = N(2)-succinyl-L-ornithine + 2 NH4(+) + CO2. Its pathway is amino-acid degradation; L-arginine degradation via AST pathway; L-glutamate and succinate from L-arginine: step 2/5. Its function is as follows. Catalyzes the hydrolysis of N(2)-succinylarginine into N(2)-succinylornithine, ammonia and CO(2). In Shewanella baltica (strain OS223), this protein is N-succinylarginine dihydrolase.